Here is a 274-residue protein sequence, read N- to C-terminus: NADPH-dependent 7-cyano-7-deazaguanine reductase (274 aa).

Position 80 to 82 (80 to 82 (VES)) interacts with substrate. 82–83 (SK) serves as a coordination point for NADPH. The Thioimide intermediate role is filled by cysteine 181. Aspartate 188 serves as the catalytic Proton donor. 220-221 (HE) provides a ligand contact to substrate. NADPH is bound at residue 249–250 (RG).

This sequence belongs to the GTP cyclohydrolase I family. QueF type 2 subfamily. Homodimer.

It localises to the cytoplasm. It carries out the reaction 7-aminomethyl-7-carbaguanine + 2 NADP(+) = 7-cyano-7-deazaguanine + 2 NADPH + 3 H(+). It functions in the pathway tRNA modification; tRNA-queuosine biosynthesis. Functionally, catalyzes the NADPH-dependent reduction of 7-cyano-7-deazaguanine (preQ0) to 7-aminomethyl-7-deazaguanine (preQ1). The sequence is that of NADPH-dependent 7-cyano-7-deazaguanine reductase from Burkholderia mallei (strain NCTC 10247).